A 356-amino-acid polypeptide reads, in one-letter code: MKLTINKNSAKWMQLPRDVLVGHGVLEEVGDVCRDLKLKGNALIVTGSTTQDVAGKRVSRLLEDAGNSTETVLTCRATMEEVDKLMEKALNTEATFLLGVGSGRSIDLAKLASTRLEIPFISVPTAASHDGIASSRASVIDNGKNASIQAQAPLAVIADTEIISAAPYRFLAAGCGDIISNYTAVLDWELASRLRNEYFGEYAAALSRMAARVVIENADSIKPDHETSARLVVKALVSNGVAMSIAGSSRPASGSEHMFSHALDRIAPKAALHGEQCGVGTIMMMYLHGGNWQEIRDALKKIGAPTNAEELGIEDKYIIEALLQAHSIRPDRYTILGNGLTLSAAEKVARITKVIN.

NAD(+) contacts are provided by residues Gly-103–Asp-107 and Thr-125–Ser-128. Asp-130 is a substrate binding site. Ser-134 serves as a coordination point for NAD(+). Substrate is bound at residue Asp-177. Residues Asp-177 and His-257 each contribute to the Zn(2+) site. His-261 contacts substrate. His-273 lines the Zn(2+) pocket.

Belongs to the glycerol-1-phosphate dehydrogenase family. Requires Zn(2+) as cofactor.

It localises to the cytoplasm. The enzyme catalyses sn-glycerol 1-phosphate + NAD(+) = dihydroxyacetone phosphate + NADH + H(+). The catalysed reaction is sn-glycerol 1-phosphate + NADP(+) = dihydroxyacetone phosphate + NADPH + H(+). It participates in membrane lipid metabolism; glycerophospholipid metabolism. Catalyzes the NAD(P)H-dependent reduction of dihydroxyacetonephosphate (DHAP or glycerone phosphate) to glycerol 1-phosphate (G1P). The G1P thus generated is used as the glycerophosphate backbone of phospholipids in the cellular membranes of Archaea. The polypeptide is Glycerol-1-phosphate dehydrogenase [NAD(P)+] (Methanosarcina mazei (strain ATCC BAA-159 / DSM 3647 / Goe1 / Go1 / JCM 11833 / OCM 88) (Methanosarcina frisia)).